Consider the following 435-residue polypeptide: Nucleoredoxin (435 aa).

An N-acetylserine modification is found at Ser2. Positions 167–314 (PKPFREVIAG…FPWHPKPVLE (148 aa)) constitute a Thioredoxin domain.

Belongs to the nucleoredoxin family. As to quaternary structure, associates with the phosphatase 2A holoenzyme. Interacts with PPP2CA; the interaction is direct. Interacts with DVL1 (via PDZ domain); the interaction is direct and regulated by oxidative stress. In terms of tissue distribution, widely expressed with higher expression in testis and skin.

It localises to the cytoplasm. It is found in the cytosol. The protein localises to the nucleus. The catalysed reaction is [protein]-dithiol + NAD(+) = [protein]-disulfide + NADH + H(+). It carries out the reaction [protein]-dithiol + NADP(+) = [protein]-disulfide + NADPH + H(+). Functions as a redox-dependent negative regulator of the Wnt signaling pathway, possibly by preventing ubiquitination of DVL3 by the BCR(KLHL12) complex. May also function as a transcriptional regulator act as a regulator of protein phosphatase 2A (PP2A). The polypeptide is Nucleoredoxin (Nxn) (Mus musculus (Mouse)).